The primary structure comprises 150 residues: Catabolic 3-dehydroquinase 2 (150 aa).

The active-site Proton acceptor is Y23. 3 residues coordinate substrate: N74, H80, and D87. H100 (proton donor) is an active-site residue. Residues I101–T102 and R111 each bind substrate.

The protein belongs to the type-II 3-dehydroquinase family. In terms of assembly, homododecamer. Adopts a ring-like structure, composed of an arrangement of two hexameric rings stacked on top of one another.

It catalyses the reaction 3-dehydroquinate = 3-dehydroshikimate + H2O. It participates in aromatic compound metabolism; 3,4-dihydroxybenzoate biosynthesis; 3,4-dihydroxybenzoate from 3-dehydroquinate: step 1/2. Its function is as follows. Is involved in the catabolism of quinate. Allows the utilization of quinate as carbon source via the beta-ketoadipate pathway. This Aspergillus flavus (strain ATCC 200026 / FGSC A1120 / IAM 13836 / NRRL 3357 / JCM 12722 / SRRC 167) protein is Catabolic 3-dehydroquinase 2.